The chain runs to 233 residues: Biosynthetic peptidoglycan transglycosylase (233 aa).

Residues 8–28 (LIALPVGIFIFFNAYVYGNII) form a helical membrane-spanning segment.

It belongs to the glycosyltransferase 51 family.

It is found in the cell inner membrane. The catalysed reaction is [GlcNAc-(1-&gt;4)-Mur2Ac(oyl-L-Ala-gamma-D-Glu-L-Lys-D-Ala-D-Ala)](n)-di-trans,octa-cis-undecaprenyl diphosphate + beta-D-GlcNAc-(1-&gt;4)-Mur2Ac(oyl-L-Ala-gamma-D-Glu-L-Lys-D-Ala-D-Ala)-di-trans,octa-cis-undecaprenyl diphosphate = [GlcNAc-(1-&gt;4)-Mur2Ac(oyl-L-Ala-gamma-D-Glu-L-Lys-D-Ala-D-Ala)](n+1)-di-trans,octa-cis-undecaprenyl diphosphate + di-trans,octa-cis-undecaprenyl diphosphate + H(+). It participates in cell wall biogenesis; peptidoglycan biosynthesis. Peptidoglycan polymerase that catalyzes glycan chain elongation from lipid-linked precursors. The chain is Biosynthetic peptidoglycan transglycosylase from Neisseria meningitidis serogroup C / serotype 2a (strain ATCC 700532 / DSM 15464 / FAM18).